The primary structure comprises 83 residues: uncharacterized protein (83 aa).

2 consecutive transmembrane segments (helical) span residues 23 to 43 and 56 to 76; these read FSLW…QLIK and TIFV…CVFL.

The protein resides in the cell membrane. This is an uncharacterized protein from Bacillus subtilis (strain 168).